A 70-amino-acid chain; its full sequence is MFLEELKPVTRELCQQPIAFAGGFVSGVLRLKLTDDPLKKWLQKQGVTDFSGADINQTAQDNRPQSIDID.

The protein belongs to the UPF0426 family.

The chain is UPF0426 protein ssl0294 from Synechocystis sp. (strain ATCC 27184 / PCC 6803 / Kazusa).